Reading from the N-terminus, the 99-residue chain is Integration host factor subunit alpha (99 aa).

Belongs to the bacterial histone-like protein family. Heterodimer of an alpha and a beta chain.

Its function is as follows. This protein is one of the two subunits of integration host factor, a specific DNA-binding protein that functions in genetic recombination as well as in transcriptional and translational control. The chain is Integration host factor subunit alpha from Psychrobacter arcticus (strain DSM 17307 / VKM B-2377 / 273-4).